The following is a 254-amino-acid chain: uncharacterized protein (254 aa).

This is an uncharacterized protein from Acidianus filamentous virus 2 (isolate Italy/Pozzuoli) (AFV-2).